The following is a 169-amino-acid chain: Large ribosomal subunit protein uL15 (169 aa).

Residues 1 to 13 are compositionally biased toward basic and acidic residues; that stretch reads MKLNEIRDNEGAT. A disordered region spans residues 1 to 40; sequence MKLNEIRDNEGATKNRMRVGRGIGSGKGKTGGRGVKGQKA. The span at 21–35 shows a compositional bias: gly residues; sequence RGIGSGKGKTGGRGV.

The protein belongs to the universal ribosomal protein uL15 family. As to quaternary structure, part of the 50S ribosomal subunit.

Binds to the 23S rRNA. This is Large ribosomal subunit protein uL15 from Methylorubrum populi (strain ATCC BAA-705 / NCIMB 13946 / BJ001) (Methylobacterium populi).